We begin with the raw amino-acid sequence, 288 residues long: MALRSVSRRLGSRILNQRSFVASLHSHATSFGFQEVKEEEKSKLVGNVFTNVASSYDIMNDVMSGGLHRLWKERLVGKLSPFAGMKHLDVAGGTGDVAFRIYDAVYSVKRRALQKVDEASLEETQIYVCDINPNMLNVGKQRAAERGLRDNKSLVWVEGDAEALSFDDNSMDGYTIAFGIRNVTHIEKALAEAYRVLKRGGRFLCLELSHVEIPVFKNLYDLYSFQVIPNLGELIAGDRESYQYLVESVRRFPPQERFASMIADAGFEKVEYENLVGGVVAIHSAIKL.

Residues 1–27 (MALRSVSRRLGSRILNQRSFVASLHSH) constitute a mitochondrion transit peptide. S-adenosyl-L-methionine is bound by residues Thr-94, Asp-130, and 160-161 (DA).

It belongs to the class I-like SAM-binding methyltransferase superfamily. MenG/UbiE family. In terms of assembly, component of a multi-subunit COQ enzyme complex.

The protein localises to the mitochondrion inner membrane. It carries out the reaction a 2-methoxy-6-(all-trans-polyprenyl)benzene-1,4-diol + S-adenosyl-L-methionine = a 5-methoxy-2-methyl-3-(all-trans-polyprenyl)benzene-1,4-diol + S-adenosyl-L-homocysteine + H(+). The protein operates within cofactor biosynthesis; ubiquinone biosynthesis. Its function is as follows. Methyltransferase required for the conversion of 2-polyprenyl-6-methoxy-1,4-benzoquinol (DDMQH2) to 2-polyprenyl-3-methyl-6-methoxy-1,4-benzoquinol (DMQH2). The chain is 2-methoxy-6-polyprenyl-1,4-benzoquinol methylase, mitochondrial from Arabidopsis thaliana (Mouse-ear cress).